The primary structure comprises 185 residues: Protein E3 homolog (185 aa).

The Z-binding domain occupies 7–73; that stretch reads TVNDAEIFSL…SNPPKWFKNY (67 aa). Residues 112-179 form the DRBM domain; it reads NPCIVLNEYC…SKITMDEILD (68 aa).

Belongs to the poxviridae E3 protein family.

In terms of biological role, RNA-binding protein that plays a role in the inhibition of multiple cellular antiviral responses activated by double-stranded RNA (dsRNA), such as inhibition of PKR activation, necroptosis, and IFN-mediated antiviral activities. Recognizes and binds Z-RNA structures via its Z-binding domain and dsRNA via its DRBM domain: RNA-binding activity is required to escape host ZBP1-dependent necroptosis. Mechanistically, the Z-binding domain binds Z-RNAs that are produced during Yaba-like disease virus infection, thereby competing with Z-RNA detection by host ZBP1, suppressing ZBP1-dependent necroptosis. The polypeptide is Protein E3 homolog (Yaba-like disease virus (YLDV)).